A 184-amino-acid chain; its full sequence is Adenine phosphoribosyltransferase 2 (184 aa).

It belongs to the purine/pyrimidine phosphoribosyltransferase family. Homodimer.

The protein localises to the cytoplasm. It catalyses the reaction AMP + diphosphate = 5-phospho-alpha-D-ribose 1-diphosphate + adenine. It participates in purine metabolism; AMP biosynthesis via salvage pathway; AMP from adenine: step 1/1. Functionally, catalyzes a salvage reaction resulting in the formation of AMP, that is energically less costly than de novo synthesis. This chain is Adenine phosphoribosyltransferase 2, found in Rhizobium etli (strain ATCC 51251 / DSM 11541 / JCM 21823 / NBRC 15573 / CFN 42).